The primary structure comprises 249 residues: NAD-dependent protein deacylase 2 (249 aa).

Residues 1–240 (MNVADLLASS…PRLVEEVKRR (240 aa)) form the Deacetylase sirtuin-type domain. An NAD(+)-binding site is contributed by 18 to 37 (GAGISAESGVPTFRGPGGLW). Tyr-62 and Arg-65 together coordinate substrate. 96-99 (QNVD) serves as a coordination point for NAD(+). The active-site Proton acceptor is His-114. Zn(2+) contacts are provided by Cys-122, Cys-125, Cys-142, and Cys-145. NAD(+)-binding positions include 182–184 (GTS), 208–210 (NVE), and Ala-226.

Belongs to the sirtuin family. Class III subfamily. Zn(2+) serves as cofactor.

Its subcellular location is the cytoplasm. It carries out the reaction N(6)-acetyl-L-lysyl-[protein] + NAD(+) + H2O = 2''-O-acetyl-ADP-D-ribose + nicotinamide + L-lysyl-[protein]. It catalyses the reaction N(6)-succinyl-L-lysyl-[protein] + NAD(+) + H2O = 2''-O-succinyl-ADP-D-ribose + nicotinamide + L-lysyl-[protein]. NAD-dependent lysine deacetylase and desuccinylase that specifically removes acetyl and succinyl groups on target proteins. Modulates the activities of several proteins which are inactive in their acylated form. Deacetylates the N-terminal lysine residue of Alba, the major archaeal chromatin protein and that, in turn, increases Alba's DNA binding affinity, thereby repressing transcription. The chain is NAD-dependent protein deacylase 2 from Pyrobaculum aerophilum (strain ATCC 51768 / DSM 7523 / JCM 9630 / CIP 104966 / NBRC 100827 / IM2).